The following is a 282-amino-acid chain: NADPH-dependent 7-cyano-7-deazaguanine reductase (282 aa).

88 to 90 is a substrate binding site; that stretch reads IES. 90-91 lines the NADPH pocket; sequence SK. Residue cysteine 190 is the Thioimide intermediate of the active site. The active-site Proton donor is aspartate 197. 229–230 contributes to the substrate binding site; sequence HE. 258–259 contacts NADPH; it reads RG.

It belongs to the GTP cyclohydrolase I family. QueF type 2 subfamily. As to quaternary structure, homodimer.

Its subcellular location is the cytoplasm. It carries out the reaction 7-aminomethyl-7-carbaguanine + 2 NADP(+) = 7-cyano-7-deazaguanine + 2 NADPH + 3 H(+). The protein operates within tRNA modification; tRNA-queuosine biosynthesis. In terms of biological role, catalyzes the NADPH-dependent reduction of 7-cyano-7-deazaguanine (preQ0) to 7-aminomethyl-7-deazaguanine (preQ1). This chain is NADPH-dependent 7-cyano-7-deazaguanine reductase, found in Escherichia coli (strain UTI89 / UPEC).